We begin with the raw amino-acid sequence, 348 residues long: Anthranilate phosphoribosyltransferase (348 aa).

Residues Gly84, 87–88 (GD), Thr92, 94–97 (NITT), 112–120 (KHGNRSVSS), and Ser124 contribute to the 5-phospho-alpha-D-ribose 1-diphosphate site. Gly84 contacts anthranilate. Thr96 contacts Mg(2+). Residue Asn115 participates in anthranilate binding. Arg170 is a binding site for anthranilate. 2 residues coordinate Mg(2+): Asp228 and Glu229.

This sequence belongs to the anthranilate phosphoribosyltransferase family. As to quaternary structure, homodimer. Requires Mg(2+) as cofactor.

The catalysed reaction is N-(5-phospho-beta-D-ribosyl)anthranilate + diphosphate = 5-phospho-alpha-D-ribose 1-diphosphate + anthranilate. It functions in the pathway amino-acid biosynthesis; L-tryptophan biosynthesis; L-tryptophan from chorismate: step 2/5. Its function is as follows. Catalyzes the transfer of the phosphoribosyl group of 5-phosphorylribose-1-pyrophosphate (PRPP) to anthranilate to yield N-(5'-phosphoribosyl)-anthranilate (PRA). The chain is Anthranilate phosphoribosyltransferase from Corynebacterium glutamicum (strain R).